The primary structure comprises 700 residues: Methionine--tRNA ligase (700 aa).

A 'HIGH' region motif is present at residues 12-22; sequence PYANGNFHIGH. The Zn(2+) site is built by cysteine 143, cysteine 146, cysteine 156, and cysteine 159. The 'KMSKS' region motif lies at 348 to 352; that stretch reads KMSKS. ATP is bound at residue lysine 351. The region spanning 594–700 is the tRNA-binding domain; it reads DFSKIDLRIA…AGAQPGMRVH (107 aa).

Belongs to the class-I aminoacyl-tRNA synthetase family. MetG type 1 subfamily. As to quaternary structure, homodimer. It depends on Zn(2+) as a cofactor.

It localises to the cytoplasm. It catalyses the reaction tRNA(Met) + L-methionine + ATP = L-methionyl-tRNA(Met) + AMP + diphosphate. In terms of biological role, is required not only for elongation of protein synthesis but also for the initiation of all mRNA translation through initiator tRNA(fMet) aminoacylation. The polypeptide is Methionine--tRNA ligase (Albidiferax ferrireducens (strain ATCC BAA-621 / DSM 15236 / T118) (Rhodoferax ferrireducens)).